Reading from the N-terminus, the 395-residue chain is Chorismate synthase (395 aa).

Positions 40 and 46 each coordinate NADP(+). FMN is bound by residues 135 to 137 (RAS) and 256 to 257 (QA). The span at 272–283 (RRGSQAHDEMRP) shows a compositional bias: basic and acidic residues. The tract at residues 272–296 (RRGSQAHDEMRPGPDGILRSTNRAG) is disordered. FMN-binding positions include G300, 315-319 (KPIST), and R341.

The protein belongs to the chorismate synthase family. In terms of assembly, homotetramer. It depends on FMNH2 as a cofactor.

The enzyme catalyses 5-O-(1-carboxyvinyl)-3-phosphoshikimate = chorismate + phosphate. It participates in metabolic intermediate biosynthesis; chorismate biosynthesis; chorismate from D-erythrose 4-phosphate and phosphoenolpyruvate: step 7/7. Functionally, catalyzes the anti-1,4-elimination of the C-3 phosphate and the C-6 proR hydrogen from 5-enolpyruvylshikimate-3-phosphate (EPSP) to yield chorismate, which is the branch point compound that serves as the starting substrate for the three terminal pathways of aromatic amino acid biosynthesis. This reaction introduces a second double bond into the aromatic ring system. This chain is Chorismate synthase, found in Rhodococcus opacus (strain B4).